The sequence spans 202 residues: LexA repressor 2 (202 aa).

Residues 28–48 constitute a DNA-binding region (H-T-H motif); the sequence is LADIATRFGFASRSVARKHIT. Catalysis depends on for autocatalytic cleavage activity residues Ser123 and Lys160.

Belongs to the peptidase S24 family. In terms of assembly, homodimer.

It catalyses the reaction Hydrolysis of Ala-|-Gly bond in repressor LexA.. In terms of biological role, represses a number of genes involved in the response to DNA damage (SOS response), including recA and lexA. In the presence of single-stranded DNA, RecA interacts with LexA causing an autocatalytic cleavage which disrupts the DNA-binding part of LexA, leading to derepression of the SOS regulon and eventually DNA repair. The protein is LexA repressor 2 of Pseudomonas putida (strain ATCC 47054 / DSM 6125 / CFBP 8728 / NCIMB 11950 / KT2440).